We begin with the raw amino-acid sequence, 129 residues long: Large ribosomal subunit protein bL12c (129 aa).

Belongs to the bacterial ribosomal protein bL12 family. In terms of assembly, homodimer. Part of the ribosomal stalk of the 50S ribosomal subunit. Forms a multimeric L10(L12)X complex, where L10 forms an elongated spine to which 2 to 4 L12 dimers bind in a sequential fashion. Binds GTP-bound translation factors.

It is found in the plastid. It localises to the chloroplast. Its function is as follows. Forms part of the ribosomal stalk which helps the ribosome interact with GTP-bound translation factors. Is thus essential for accurate translation. The protein is Large ribosomal subunit protein bL12c of Pyropia yezoensis (Susabi-nori).